Here is a 568-residue protein sequence, read N- to C-terminus: Serine/threonine-protein kinase RIO1 (568 aa).

Disordered stretches follow at residues 14–70 (GQFD…DDDW) and 83–109 (YVWNGGSNPQANRQTSDSSSAKMSTPA). A phosphoserine mark is found at serine 21 and serine 22. Residues 24 to 38 (SENRDLKTVKEKDDI) show a composition bias toward basic and acidic residues. The segment covering 51 to 70 (GEGEIEDEEEEGYDDDDDDW) has biased composition (acidic residues). The segment covering 87–105 (GGSNPQANRQTSDSSSAKM) has biased composition (polar residues). Positions 180–479 (TEINGCISTG…TGLKKDLSGV (300 aa)) constitute a Protein kinase domain. Lysine 208, serine 278, and isoleucine 280 together coordinate ATP. Aspartate 324 (proton acceptor) is an active-site residue. Residues asparagine 329 and aspartate 341 each contribute to the Mg(2+) site. Residue aspartate 341 is the 4-aspartylphosphate intermediate of the active site. The tract at residues 490-568 (VEERTCSDSE…EKTAKTKKGK (79 aa)) is disordered. The segment covering 497–513 (DSEDIGSSECSDTDSEE) has biased composition (acidic residues). A compositionally biased stretch (basic and acidic residues) spans 514–543 (QGDHARPKKHTTDPDIDKKERKKMVKEAQR). The segment covering 544 to 568 (EKRKNKIPKHVKKRKEKTAKTKKGK) has biased composition (basic residues).

The protein belongs to the protein kinase superfamily. RIO-type Ser/Thr kinase family. As to quaternary structure, associates with the precursor of the 40S ribosome subunit. Interacts (via its N-terminus) with PRMT5 (via its N-terminus). Interacts with WDR77. Found in a PRMT5 complex composed of PRMT5, WDR77 and RIOK1. Interacts (via its C-terminus) with NCL; this interaction targets NCL for PRTM5 methylation. Mg(2+) is required as a cofactor.

Its subcellular location is the cytoplasm. The protein resides in the cytosol. It carries out the reaction L-seryl-[protein] + ATP = O-phospho-L-seryl-[protein] + ADP + H(+). The catalysed reaction is L-threonyl-[protein] + ATP = O-phospho-L-threonyl-[protein] + ADP + H(+). It catalyses the reaction ATP + H2O = ADP + phosphate + H(+). Involved in the final steps of cytoplasmic maturation of the 40S ribosomal subunit. Involved in processing of 18S-E pre-rRNA to the mature 18S rRNA. Required for the recycling of NOB1 and PNO1 from the late 40S precursor. The association with the very late 40S subunit intermediate may involve a translation-like checkpoint point cycle preceeding the binding to the 60S ribosomal subunit. Despite the protein kinase domain is proposed to act predominantly as an ATPase. The catalytic activity regulates its dynamic association with the 40S subunit. In addition to its role in ribosomal biogenesis acts as an adapter protein by recruiting NCL/nucleolin the to PRMT5 complex for its symmetrical methylation. This Homo sapiens (Human) protein is Serine/threonine-protein kinase RIO1.